A 432-amino-acid chain; its full sequence is Enolase (432 aa).

Residue Q163 participates in (2R)-2-phosphoglycerate binding. E205 functions as the Proton donor in the catalytic mechanism. Mg(2+) is bound by residues D242, E288, and D315. (2R)-2-phosphoglycerate contacts are provided by K340, R369, S370, and K391. The Proton acceptor role is filled by K340.

This sequence belongs to the enolase family. Homodimer. The cofactor is Mg(2+).

The protein resides in the cytoplasm. The protein localises to the secreted. It localises to the cell surface. It carries out the reaction (2R)-2-phosphoglycerate = phosphoenolpyruvate + H2O. The protein operates within carbohydrate degradation; glycolysis; pyruvate from D-glyceraldehyde 3-phosphate: step 4/5. Its activity is regulated as follows. The covalent binding to the substrate causes inactivation of the enzyme, and possibly serves as a signal for the export of the protein. Functionally, catalyzes the reversible conversion of 2-phosphoglycerate (2-PG) into phosphoenolpyruvate (PEP). It is essential for the degradation of carbohydrates via glycolysis. The sequence is that of Enolase from Enterococcus hirae.